The primary structure comprises 612 residues: Phragmoplastin DRP1D (612 aa).

Residue M1 is modified to N-acetylmethionine. A Dynamin-type G domain is found at 32–301 (WEALPSVAVV…LESVIRSRIP (270 aa)). The tract at residues 42–49 (GGQSSGKS) is G1 motif. Position 45–50 (45–50 (SSGKSS)) interacts with GTP. The tract at residues 68–70 (VTR) is G2 motif. The G3 motif stretch occupies residues 143–146 (DLPG). The interval 212-215 (TKLD) is G4 motif. GTP contacts are provided by residues 213-218 (KLDLMD) and 243-246 (NRSQ). Residues 242 to 245 (VNRS) are G5 motif. The GED domain occupies 520–612 (FRKIASNVAA…DEIDAAVWVR (93 aa)).

Belongs to the TRAFAC class dynamin-like GTPase superfamily. Dynamin/Fzo/YdjA family. Forms homodimer and may homooligomerize and heterooligomerize to form the phragmoplastin complex. Binds to PHIP1.

It is found in the cytoplasm. The protein resides in the cytoskeleton. It carries out the reaction GTP + H2O = GDP + phosphate + H(+). In terms of biological role, putative microtubule-associated force-producing protein. Has a GTPase activity. This Arabidopsis thaliana (Mouse-ear cress) protein is Phragmoplastin DRP1D.